Reading from the N-terminus, the 342-residue chain is Phosphate acyltransferase (342 aa).

It belongs to the PlsX family. As to quaternary structure, homodimer. Probably interacts with PlsY.

Its subcellular location is the cytoplasm. It carries out the reaction a fatty acyl-[ACP] + phosphate = an acyl phosphate + holo-[ACP]. It functions in the pathway lipid metabolism; phospholipid metabolism. Functionally, catalyzes the reversible formation of acyl-phosphate (acyl-PO(4)) from acyl-[acyl-carrier-protein] (acyl-ACP). This enzyme utilizes acyl-ACP as fatty acyl donor, but not acyl-CoA. The chain is Phosphate acyltransferase from Shewanella baltica (strain OS155 / ATCC BAA-1091).